The sequence spans 271 residues: MKKMILIAGPCVIESKDLIFKVAEQLKNFNENPNIEFYFKSSFDKANRTSINSFRGPGLEEGLKILQSVKDEFGMKILTDIHESNQANPVSEVADVLQIPAFLCRQTDLLVAAAKTKAKVNIKKGQFLNPSDIKYSVKKALQTRGIEDEGYEAAQKNGVFVAERGSSFGYGNLVVDMRSLVIMREFAPVIFDATHSVQMPGAAGGSSGGKSEFVEPLARAAAAVGIDGFFFETHINPCEALCDGPNMLNLTRLKNCVNTLLEIQNIIKENK.

Belongs to the KdsA family.

It is found in the cytoplasm. The enzyme catalyses D-arabinose 5-phosphate + phosphoenolpyruvate + H2O = 3-deoxy-alpha-D-manno-2-octulosonate-8-phosphate + phosphate. It functions in the pathway carbohydrate biosynthesis; 3-deoxy-D-manno-octulosonate biosynthesis; 3-deoxy-D-manno-octulosonate from D-ribulose 5-phosphate: step 2/3. The protein operates within bacterial outer membrane biogenesis; lipopolysaccharide biosynthesis. The chain is 2-dehydro-3-deoxyphosphooctonate aldolase from Campylobacter jejuni subsp. jejuni serotype O:23/36 (strain 81-176).